A 248-amino-acid chain; its full sequence is Anamorsin homolog (248 aa).

Positions 4–129 are N-terminal SAM-like domain; the sequence is FKGLQKSLYI…ETGSSARLSF (126 aa). The linker stretch occupies residues 130–161; that stretch reads AKKNANAVNVWKISGDDEELIDEEELLDEEDK. 4 residues coordinate [2Fe-2S] cluster: Cys172, Cys181, Cys184, and Cys186. Residues 172–186 form a fe-S binding site A region; the sequence is CSTTGKRKACKNCSC. Positions 209, 212, 220, and 223 each coordinate [4Fe-4S] cluster. 2 short sequence motifs (cx2C motif) span residues 209–212 and 220–223; these read CGNC and CSTC. The fe-S binding site B stretch occupies residues 209-223; sequence CGNCYLGDAFRCSTC.

It belongs to the anamorsin family. Monomer. [2Fe-2S] cluster is required as a cofactor. The cofactor is [4Fe-4S] cluster.

It localises to the cytoplasm. The protein resides in the mitochondrion intermembrane space. In terms of biological role, component of the cytosolic iron-sulfur (Fe-S) protein assembly (CIA) machinery. Required for the maturation of extramitochondrial Fe-S proteins. Part of an electron transfer chain functioning in an early step of cytosolic Fe-S biogenesis, facilitating the de novo assembly of a [4Fe-4S] cluster on the cytosolic Fe-S scaffold complex. Electrons are transferred from NADPH via a FAD- and FMN-containing diflavin oxidoreductase. Together with the diflavin oxidoreductase, also required for the assembly of the diferric tyrosyl radical cofactor of ribonucleotide reductase (RNR), probably by providing electrons for reduction during radical cofactor maturation in the catalytic small subunit. This is Anamorsin homolog from Drosophila simulans (Fruit fly).